We begin with the raw amino-acid sequence, 489 residues long: Glucose-6-phosphate 1-dehydrogenase (489 aa).

Residues 15–22 (GATGDLAK), arginine 49, 86–87 (DV), and lysine 149 contribute to the NADP(+) site. 4 residues coordinate substrate: histidine 179, lysine 183, glutamate 217, and aspartate 236. Histidine 241 functions as the Proton acceptor in the catalytic mechanism. Residues lysine 341 and lysine 346 each contribute to the substrate site.

Belongs to the glucose-6-phosphate dehydrogenase family.

The enzyme catalyses D-glucose 6-phosphate + NADP(+) = 6-phospho-D-glucono-1,5-lactone + NADPH + H(+). The protein operates within carbohydrate degradation; pentose phosphate pathway; D-ribulose 5-phosphate from D-glucose 6-phosphate (oxidative stage): step 1/3. Its function is as follows. Catalyzes the oxidation of glucose 6-phosphate to 6-phosphogluconolactone. The sequence is that of Glucose-6-phosphate 1-dehydrogenase from Bacillus subtilis (strain 168).